The primary structure comprises 317 residues: Probable pathogenesis-related protein CaO19.6200 (317 aa).

An N-terminal signal peptide occupies residues 1-23 (MKFLQSFPVILAVFSFAANLVSS). 2 disordered regions span residues 52–116 (RLET…TTVT) and 155–179 (PSAP…DSQL). A compositionally biased stretch (low complexity) spans 58 to 76 (PTSTTTTIVIPSSKPSSPE). Composition is skewed to polar residues over residues 84–116 (QPMF…TTVT) and 168–179 (ENNSGTNDDSQL). Residue N169 is glycosylated (N-linked (GlcNAc...) asparagine). The 111-residue stretch at 187 to 297 (LEAHNIKRAS…GWGLYIICNY (111 aa)) folds into the SCP domain.

The protein belongs to the CRISP family.

The protein localises to the secreted. Functionally, secreted protein that acts as a virulence factor during infections. The protein is Probable pathogenesis-related protein CaO19.6200 of Candida albicans (strain SC5314 / ATCC MYA-2876) (Yeast).